The following is a 238-amino-acid chain: Accessory gene regulator A (238 aa).

The Response regulatory domain occupies 2 to 125; that stretch reads KIFICEDDPK…LRTRIIDCLE (124 aa). The residue at position 59 (D59) is a 4-aspartylphosphate. An HTH LytTR-type domain is found at 143-238; it reads IELKRGSNSV…YASVRNVKKK (96 aa).

It localises to the cytoplasm. In terms of biological role, required for high-level post-exponential phase expression of a series of secreted proteins. This Staphylococcus aureus (strain Mu50 / ATCC 700699) protein is Accessory gene regulator A (agrA).